Consider the following 97-residue polypeptide: Secreted Ly-6/uPAR domain-containing protein 2 (97 aa).

A signal peptide spans 1 to 22 (MQFHTGLLLAAVLSLQLAAAQA). One can recognise a UPAR/Ly6 domain in the interval 23–95 (LWCHQCTGFG…IACCQTSLCN (73 aa)). 5 disulfide bridges follow: Cys25–Cys47, Cys28–Cys34, Cys40–Cys68, Cys72–Cys88, and Cys89–Cys94.

Interacts with CHRNA3, CHRNA4, CHRNA5, CHRNA7, CHRNB2 and CHRNB4. Interacts with CHRM1 and CHRM3 probably in an allosteric manner.

It is found in the secreted. In terms of biological role, binds and may modulate the functional properties of nicotinic and muscarinic acetylcholine receptors. May regulate keratinocytes proliferation, differentiation and apoptosis. In vitro moderately inhibits ACh-evoked currents of alpha-3:beta-2-containing nAChRs, strongly these of alpha-4:beta-2-containing nAChRs, modulates alpha-7-containing nAChRs, and inhibits nicotine-induced signaling probably implicating alpha-3:beta-4-containing nAChRs. Proposed to act on alpha-3:beta-2 and alpha-7 nAChRs in an orthosteric, and on mAChRs, such as CHRM1 and CHRM3, in an allosteric manner. The protein is Secreted Ly-6/uPAR domain-containing protein 2 of Macaca mulatta (Rhesus macaque).